A 101-amino-acid chain; its full sequence is Protein PIP-1 (101 aa).

Positions 1–23 (MGKCLLLPLLLVVLSSLLGFPQA) are cleaved as a signal peptide. The 78-residue stretch at 24-101 (LECFQCQRVS…CHDSPFCNKF (78 aa)) folds into the UPAR/Ly6 domain. 5 cysteine pairs are disulfide-bonded: cysteine 26/cysteine 53, cysteine 29/cysteine 38, cysteine 45/cysteine 71, cysteine 75/cysteine 91, and cysteine 92/cysteine 98. Asparagine 84 carries N-linked (GlcNAc...) asparagine glycosylation.

Its subcellular location is the secreted. The chain is Protein PIP-1 from Sus scrofa (Pig).